The chain runs to 136 residues: Ig heavy chain V-A2 region P-MU-3 (136 aa).

The signal sequence occupies residues 1–19 (METGLRWLLLVAVLKGVQC). Position 20 is a pyrrolidone carboxylic acid (Gln-20). In terms of domain architecture, Ig-like spans 20-127 (QSVKESEGGL…ENEFFNAIWG (108 aa)).

This chain is Ig heavy chain V-A2 region P-MU-3, found in Oryctolagus cuniculus (Rabbit).